Consider the following 148-residue polypeptide: D-aminoacyl-tRNA deacylase (148 aa).

The Gly-cisPro motif, important for rejection of L-amino acids motif lies at 137–138 (GP).

It belongs to the DTD family. In terms of assembly, homodimer.

The protein localises to the cytoplasm. It catalyses the reaction glycyl-tRNA(Ala) + H2O = tRNA(Ala) + glycine + H(+). It carries out the reaction a D-aminoacyl-tRNA + H2O = a tRNA + a D-alpha-amino acid + H(+). An aminoacyl-tRNA editing enzyme that deacylates mischarged D-aminoacyl-tRNAs. Also deacylates mischarged glycyl-tRNA(Ala), protecting cells against glycine mischarging by AlaRS. Acts via tRNA-based rather than protein-based catalysis; rejects L-amino acids rather than detecting D-amino acids in the active site. By recycling D-aminoacyl-tRNA to D-amino acids and free tRNA molecules, this enzyme counteracts the toxicity associated with the formation of D-aminoacyl-tRNA entities in vivo and helps enforce protein L-homochirality. This Lactiplantibacillus plantarum (strain ATCC BAA-793 / NCIMB 8826 / WCFS1) (Lactobacillus plantarum) protein is D-aminoacyl-tRNA deacylase.